A 345-amino-acid polypeptide reads, in one-letter code: Fe-S cluster assembly protein DRE2 (345 aa).

Positions 29-163 (GDSGDRTLLL…KPDYAEQEVV (135 aa)) are N-terminal SAM-like domain. Residues 164–237 (PLRFGAKKVN…EDTLLTEADL (74 aa)) form a linker region. Cys247, Cys258, Cys261, and Cys263 together coordinate [2Fe-2S] cluster. The fe-S binding site A stretch occupies residues 247 to 263 (CAPQPGKKRRACKDCTC). Positions 308, 311, 319, and 322 each coordinate [4Fe-4S] cluster. 2 consecutive short sequence motifs (cx2C motif) follow at residues 308 to 311 (CNSC) and 319 to 322 (CADC). The tract at residues 308–322 (CNSCYLGDAFRCADC) is fe-S binding site B.

Belongs to the anamorsin family. Monomer. Interacts with TAH18. Interacts with MIA40. [2Fe-2S] cluster serves as cofactor. [4Fe-4S] cluster is required as a cofactor.

It localises to the cytoplasm. The protein resides in the mitochondrion intermembrane space. Component of the cytosolic iron-sulfur (Fe-S) protein assembly (CIA) machinery required for the maturation of extramitochondrial Fe-S proteins. Part of an electron transfer chain functioning in an early step of cytosolic Fe-S biogenesis, facilitating the de novo assembly of a [4Fe-4S] cluster on the scaffold complex CFD1-NBP35. Electrons are transferred to DRE2 from NADPH via the FAD- and FMN-containing protein TAH18. TAH18-DRE2 are also required for the assembly of the diferric tyrosyl radical cofactor of ribonucleotide reductase (RNR), probably by providing electrons for reduction during radical cofactor maturation in the catalytic small subunit RNR2. The sequence is that of Fe-S cluster assembly protein DRE2 from Podospora anserina (strain S / ATCC MYA-4624 / DSM 980 / FGSC 10383) (Pleurage anserina).